Here is a 265-residue protein sequence, read N- to C-terminus: Cytosolic Fe-S cluster assembly factor NUBP2 homolog (265 aa).

Residue 22–29 coordinates ATP; sequence GKGGVGKS. Positions 196 and 199 each coordinate [4Fe-4S] cluster.

It belongs to the Mrp/NBP35 ATP-binding proteins family. NUBP2/CFD1 subfamily. As to quaternary structure, heterotetramer of 2 NUBP1 and 2 NUBP2 chains. [4Fe-4S] cluster serves as cofactor.

The protein localises to the cytoplasm. Functionally, component of the cytosolic iron-sulfur (Fe/S) protein assembly (CIA) machinery. Required for maturation of extramitochondrial Fe-S proteins. The NUBP1-NUBP2 heterotetramer forms a Fe-S scaffold complex, mediating the de novo assembly of an Fe-S cluster and its transfer to target apoproteins. The chain is Cytosolic Fe-S cluster assembly factor NUBP2 homolog from Trichoplax adhaerens (Trichoplax reptans).